Consider the following 290-residue polypeptide: 7-methylguanosine phosphate-specific 5'-nucleotidase B (290 aa).

Asp39 serves as the catalytic Nucleophile. The Mg(2+) site is built by Asp39 and Asp41. Catalysis depends on Asp41, which acts as the Proton donor. Residue Glu86 participates in CMP binding. Glu86 is a binding site for N(7)-methyl-GMP. Residues 154 to 155 and Lys203 each bind substrate; that span reads SA. Asp228 contacts Mg(2+).

This sequence belongs to the pyrimidine 5'-nucleotidase family. In terms of assembly, monomer.

It is found in the cytoplasm. It catalyses the reaction N(7)-methyl-GMP + H2O = N(7)-methylguanosine + phosphate. The enzyme catalyses CMP + H2O = cytidine + phosphate. The catalysed reaction is a ribonucleoside 5'-phosphate + H2O = a ribonucleoside + phosphate. Functionally, specifically hydrolyzes 7-methylguanosine monophosphate (m(7)GMP) to 7-methylguanosine and inorganic phosphate. The specific activity for m(7)GMP may protect cells against undesired salvage of m(7)GMP and its incorporation into nucleic acids. Also has weak activity for CMP. UMP and purine nucleotides are poor substrates. This chain is 7-methylguanosine phosphate-specific 5'-nucleotidase B (Nt5c3b-b), found in Xenopus laevis (African clawed frog).